The chain runs to 508 residues: Cytochrome P450 monooxygenase dmxR5 (508 aa).

Residues 24 to 44 traverse the membrane as a helical segment; sequence LTLGLGAILVVLMSFLAFLSY. 2 N-linked (GlcNAc...) asparagine glycosylation sites follow: Asn387 and Asn405. Residue Cys451 coordinates heme. An N-linked (GlcNAc...) asparagine glycan is attached at Asn462. Positions 481–508 are disordered; sequence EHKKSTQESGHGVPLPSKLSKFSPREEN.

It belongs to the cytochrome P450 family. The cofactor is heme.

The protein localises to the membrane. The protein operates within secondary metabolite biosynthesis. Cytochrome P450 monooxygenase; part of the gene cluster that mediates the biosynthesis of the dimeric xanthones cryptosporioptides. The pathway begins with the synthesis of atrochrysone thioester by the polyketide synthase dmx-nrPKS. The atrochrysone carboxyl ACP thioesterase dmxR1 then breaks the thioester bond and releases the atrochrysone carboxylic acid from dmx-nrPKS. Atrochrysone carboxylic acid is decarboxylated by the decarboxylase dmxR15, and oxidized by the anthrone oxygenase dmxR16 to yield emodin. Emodin is then reduced to emodin hydroquinone by the oxidoreductase dmxR7. A-ring reduction by the short chain dehydrogenase dmxR18, dehydration by the scytalone dehydratase-like protein dmxR17 and probable spontaneous re-oxidation, results in overall deoxygenation to chrysophanol. Baeyer-Villiger oxidation by the Baeyer-Villiger monooxygenase (BVMO) dmxR6 then yields monodictylactone in equilibrium with monodictyphenone. In the case of the cryptosporioptides biosynthesis, monodictylactone is reduced at C-12 to an alcohol (by the short chain dehydrogenases dmxR12 or dmxR8) and hydroxylated at C-5 by dmxR9, yielding the electron-rich aromatic which could eliminate H(2)O to form the ortho-quinonemethide, followed by tautomerisation to paraquinone and complete the formal reduction to produce the 10-methylgroup. Conjugate addition of C-4a-OH to the resulting paraquinone by the monooxygenase dmxR10 then gives cyclohexadienone, which is then reduced at C-5 by the short chain dehydrogenase dmxR3 to give the dihydroxanthone. The 6,7-epoxide in the cryptosporioptides could be introduced by the cytochrome P450 monooxygenase dmxL3. The highly reducing PKS dmxL2 manufactures butyrate, which is further carboxylated by dmxL1 to form ethylmalonate. It is not yet clear whether the carboxylation occurs while the butyrate is attached to the ACP of dmxL2, but this unusual fungal metabolite could then be esterified to O-5 by the O-acetyltransferase dmxR13. Finally, dimerization performed by dmxR5 gives the observed dimers cryptosporioptides A, B and C as the final products of the pathway. The protein is Cytochrome P450 monooxygenase dmxR5 of Cryptosporiopsis sp. (strain 8999).